The primary structure comprises 161 residues: Afimbrial adhesin AFA-I (161 aa).

A signal peptide spans 1–21 (MKKLAIIGATSVMMMTGTAQA).

Belongs to the Dr-adhesin family.

The protein localises to the fimbrium. In terms of biological role, hemagglutinins of uropathogenic E.coli mediate adherence to the upper urinary tract. These adhesins bind to the Dr blood group antigen and also agglutinate human erythrocytes in the presence of D-mannose (mannose-resistant hemagglutination (MRHA)). This is Afimbrial adhesin AFA-I (afaE1) from Escherichia coli.